A 1003-amino-acid polypeptide reads, in one-letter code: Leucine-rich repeat receptor-like serine/threonine-protein kinase BAM1 (1003 aa).

The N-terminal stretch at 1–19 (MKLFLLLLFLLHISHTFTA) is a signal peptide. At 20–640 (SRPISEFRAL…HSKGPLSASM (621 aa)) the chain is on the extracellular side. LRR repeat units lie at residues 68–92 (RRHV…VSHL), 93–116 (RLLQ…ISSL), 117–140 (SGLR…ISSG), 142–165 (VNLR…VTNL), 166–191 (TQLR…SWPV), 193–213 (EYLA…IGNL), 215–238 (TLRE…IGNL), 239–262 (SELV…IGKL), 263–285 (QKLD…ELGT), 286–310 (LSSL…FAEL), 312–334 (NLTL…IGDL), 335–358 (PELE…LGEN), 359–382 (GKLN…MCSG), 385–406 (LETL…LGKC), 407–430 (ESLT…LFGL), 432–454 (KLTQ…GGVS), 455–480 (VNLG…NFTG), 482–502 (QKLL…VGKL), 503–526 (QQLS…ISRC), 527–550 (KLLT…ITAM), 551–574 (KILN…ISSM), and 575–598 (QSLT…GQFS). Residues Asn80, Asn97, Asn123, Asn130, Asn153, and Asn164 are each glycosylated (N-linked (GlcNAc...) asparagine). N-linked (GlcNAc...) asparagine glycosylation is found at Asn212 and Asn237. 2 N-linked (GlcNAc...) asparagine glycosylation sites follow: Asn312 and Asn346. Asn420 is a glycosylation site (N-linked (GlcNAc...) asparagine). An N-linked (GlcNAc...) asparagine glycan is attached at Asn477. 3 N-linked (GlcNAc...) asparagine glycosylation sites follow: Asn557, Asn586, and Asn601. Residues 641-661 (KLLLVLGLLVCSIAFAVVAII) traverse the membrane as a helical segment. Residues 662–1003 (KARSLKKASE…VQSPPDLLNL (342 aa)) are Cytoplasmic-facing. Thr686 bears the Phosphothreonine mark. Residues 694–971 (LKEDNIIGKG…VQILTEIPKL (278 aa)) enclose the Protein kinase domain. Residues 700–708 (IGKGGAGIV) and Lys722 each bind ATP. Residues Tyr769 and Tyr807 each carry the phosphotyrosine modification. Asp820 (proton acceptor) is an active-site residue. Ser855 is modified (phosphoserine). Residues Tyr863 and Tyr870 each carry the phosphotyrosine modification. Thr871 carries the phosphothreonine modification. The tract at residues 969–1003 (PKLPPSKDQPMTESAPESELSPKSGVQSPPDLLNL) is disordered. Ser996 is modified (phosphoserine).

It belongs to the protein kinase superfamily. Ser/Thr protein kinase family. As to quaternary structure, self-interacts and interacts with BAM2 and CLV1. Binds to the CLV3, CLE5, CLE11, CLE18, CLE19, CLE22, CLE25, CLE26, CLE40, CLE41 and CLE42 mature peptides, probably via its extracellular leucine-rich repeat region. As to expression, expressed in seedlings, roots, leaves, inflorescences, flowers and siliques.

The protein localises to the cell membrane. It carries out the reaction L-seryl-[protein] + ATP = O-phospho-L-seryl-[protein] + ADP + H(+). The enzyme catalyses L-threonyl-[protein] + ATP = O-phospho-L-threonyl-[protein] + ADP + H(+). In terms of biological role, necessary for male gametophyte development, as well as ovule specification and function. Involved in cell-cell communication process required during early anther development, and regulating cell division and differentiation to organize cell layers. Required for the development of high-ordered vascular strands within the leaf and a correlated control of leaf shape, size and symmetry. May regulate the CLV1-dependent CLV3-mediated signaling in meristems maintenance. The chain is Leucine-rich repeat receptor-like serine/threonine-protein kinase BAM1 (BAM1) from Arabidopsis thaliana (Mouse-ear cress).